The chain runs to 483 residues: Aspartyl/glutamyl-tRNA(Asn/Gln) amidotransferase subunit B (483 aa).

Belongs to the GatB/GatE family. GatB subfamily. As to quaternary structure, heterotrimer of A, B and C subunits.

The enzyme catalyses L-glutamyl-tRNA(Gln) + L-glutamine + ATP + H2O = L-glutaminyl-tRNA(Gln) + L-glutamate + ADP + phosphate + H(+). The catalysed reaction is L-aspartyl-tRNA(Asn) + L-glutamine + ATP + H2O = L-asparaginyl-tRNA(Asn) + L-glutamate + ADP + phosphate + 2 H(+). Its function is as follows. Allows the formation of correctly charged Asn-tRNA(Asn) or Gln-tRNA(Gln) through the transamidation of misacylated Asp-tRNA(Asn) or Glu-tRNA(Gln) in organisms which lack either or both of asparaginyl-tRNA or glutaminyl-tRNA synthetases. The reaction takes place in the presence of glutamine and ATP through an activated phospho-Asp-tRNA(Asn) or phospho-Glu-tRNA(Gln). This Rickettsia bellii (strain RML369-C) protein is Aspartyl/glutamyl-tRNA(Asn/Gln) amidotransferase subunit B.